Here is a 65-residue protein sequence, read N- to C-terminus: Beta-defensin 106A (65 aa).

Positions 1–20 (MRTFLFLFAVLFFLTPAKNE) are cleaved as a signal peptide. Cystine bridges form between Cys-26–Cys-53, Cys-33–Cys-47, and Cys-37–Cys-54.

Belongs to the beta-defensin family. In terms of assembly, monomer. Interacts with CCR2 (via extracellular N-terminal region); this interaction may preferentially require specific tyrosine sulfation on CCR2.

It localises to the secreted. The protein resides in the membrane. Has antibacterial activity. Acts as a ligand for C-C chemokine receptor CCR2. This is Beta-defensin 106A (DEFB106A) from Pongo pygmaeus (Bornean orangutan).